The chain runs to 816 residues: uncharacterized protein (816 aa).

Residue aspartate 503–leucine 534 participates in NADP(+) binding. Serine 641 contributes to the substrate binding site. Tyrosine 661 functions as the Proton acceptor in the catalytic mechanism. 2 helical membrane-spanning segments follow: residues phenylalanine 743–leucine 763 and valine 777–asparagine 797.

Belongs to the short-chain dehydrogenases/reductases (SDR) family.

The protein localises to the membrane. This is an uncharacterized protein from Caenorhabditis elegans.